The sequence spans 348 residues: 3-isopropylmalate dehydrogenase (348 aa).

76 to 87 (GPKWTDPNNRPE) is an NAD(+) binding site. Positions 94, 104, 132, and 217 each coordinate substrate. Mg(2+) is bound by residues aspartate 217, aspartate 241, and aspartate 245. 275-287 (GSAPDIAGKNVAN) contacts NAD(+).

This sequence belongs to the isocitrate and isopropylmalate dehydrogenases family. LeuB type 1 subfamily. Homodimer. The cofactor is Mg(2+). Requires Mn(2+) as cofactor.

Its subcellular location is the cytoplasm. It catalyses the reaction (2R,3S)-3-isopropylmalate + NAD(+) = 4-methyl-2-oxopentanoate + CO2 + NADH. It participates in amino-acid biosynthesis; L-leucine biosynthesis; L-leucine from 3-methyl-2-oxobutanoate: step 3/4. Functionally, catalyzes the oxidation of 3-carboxy-2-hydroxy-4-methylpentanoate (3-isopropylmalate) to 3-carboxy-4-methyl-2-oxopentanoate. The product decarboxylates to 4-methyl-2 oxopentanoate. The protein is 3-isopropylmalate dehydrogenase of Staphylococcus aureus (strain COL).